Here is a 267-residue protein sequence, read N- to C-terminus: GTP cyclohydrolase FolE2 (267 aa).

This sequence belongs to the GTP cyclohydrolase IV family.

The enzyme catalyses GTP + H2O = 7,8-dihydroneopterin 3'-triphosphate + formate + H(+). Its pathway is cofactor biosynthesis; 7,8-dihydroneopterin triphosphate biosynthesis; 7,8-dihydroneopterin triphosphate from GTP: step 1/1. Its function is as follows. Converts GTP to 7,8-dihydroneopterin triphosphate. The protein is GTP cyclohydrolase FolE2 of Cupriavidus necator (strain ATCC 17699 / DSM 428 / KCTC 22496 / NCIMB 10442 / H16 / Stanier 337) (Ralstonia eutropha).